The chain runs to 219 residues: Large ribosomal subunit protein uL4 (219 aa).

Residues 45–103 (ARRQGTHATKTRGQVRGGGRKPYRQKGTGRARQGSIRAPQFTGGGTVHGPQPRDYDQRT) are disordered. A compositionally biased stretch (basic residues) spans 62–73 (GGRKPYRQKGTG).

Belongs to the universal ribosomal protein uL4 family. Part of the 50S ribosomal subunit.

Functionally, one of the primary rRNA binding proteins, this protein initially binds near the 5'-end of the 23S rRNA. It is important during the early stages of 50S assembly. It makes multiple contacts with different domains of the 23S rRNA in the assembled 50S subunit and ribosome. Its function is as follows. Forms part of the polypeptide exit tunnel. This is Large ribosomal subunit protein uL4 from Corynebacterium kroppenstedtii (strain DSM 44385 / JCM 11950 / CIP 105744 / CCUG 35717).